Here is a 367-residue protein sequence, read N- to C-terminus: MLNLTSQVPEPALNGTLPQSSSCFHSDWWNWLNTIQAPFLWVLFLLAALENIFVLSVFCLHKNSCTVAEIYLGNLAMADLILALGLPFWAITIANHFDWLFGEVLCRVVNTMIYMNLYSSICFLMLVSIDRYLALVKTMSMGRMRGVRWAKLYSLVIWGCTLLLSSPMLAFRTMHEYAAEGHNVTACIIKYPSRSWMVFTNILLNSVGFLLPLSIITYCTVQILQVLRNNEMQKFKEIQTERKATVLVLAVLLLFVVCWLPFQISTFLDTLLRLGVLSGCWDEHAVDVITQISSYVAYSNSGLNPLVYVIVGKRFRKKSREVYRVLCQKGGCMGEPVQMENSMGTLRTSISVERQIHKLQDWAGKKQ.

Residues 1–36 (MLNLTSQVPEPALNGTLPQSSSCFHSDWWNWLNTIQ) are Extracellular-facing. 2 N-linked (GlcNAc...) asparagine glycosylation sites follow: Asn-3 and Asn-14. A helical membrane pass occupies residues 37–60 (APFLWVLFLLAALENIFVLSVFCL). Residues 61-69 (HKNSCTVAE) lie on the Cytoplasmic side of the membrane. A helical membrane pass occupies residues 70 to 94 (IYLGNLAMADLILALGLPFWAITIA). The Extracellular portion of the chain corresponds to 95–107 (NHFDWLFGEVLCR). A disulfide bridge connects residues Cys-106 and Cys-187. Residues 108 to 129 (VVNTMIYMNLYSSICFLMLVSI) form a helical membrane-spanning segment. Over 130-151 (DRYLALVKTMSMGRMRGVRWAK) the chain is Cytoplasmic. At Tyr-132 the chain carries Phosphotyrosine. The chain crosses the membrane as a helical span at residues 152–174 (LYSLVIWGCTLLLSSPMLAFRTM). The Extracellular segment spans residues 175 to 197 (HEYAAEGHNVTACIIKYPSRSWM). N-linked (GlcNAc...) asparagine glycosylation occurs at Asn-183. Residues 198–224 (VFTNILLNSVGFLLPLSIITYCTVQIL) traverse the membrane as a helical segment. The Cytoplasmic portion of the chain corresponds to 225–243 (QVLRNNEMQKFKEIQTERK). Residues 244-268 (ATVLVLAVLLLFVVCWLPFQISTFL) traverse the membrane as a helical segment. Residues 269 to 287 (DTLLRLGVLSGCWDEHAVD) are Extracellular-facing. A helical membrane pass occupies residues 288 to 311 (VITQISSYVAYSNSGLNPLVYVIV). Residues 312–367 (GKRFRKKSREVYRVLCQKGGCMGEPVQMENSMGTLRTSISVERQIHKLQDWAGKKQ) are Cytoplasmic-facing. Tyr-323 is modified (phosphotyrosine). Cys-327 carries S-palmitoyl cysteine lipidation. Ser-342 is modified (phosphoserine). Thr-345 carries the post-translational modification Phosphothreonine. A phosphoserine; by GRK6 mark is found at Ser-349 and Ser-351.

It belongs to the G-protein coupled receptor 1 family. Bradykinin receptor subfamily. BDKRB2 sub-subfamily. As to quaternary structure, forms a complex with PECAM1 and GNAQ. Interacts with PECAM1.

It localises to the cell membrane. Receptor for bradykinin. It is associated with G proteins that activate a phosphatidylinositol-calcium second messenger system. The sequence is that of B2 bradykinin receptor (BDKRB2) from Sus scrofa (Pig).